Reading from the N-terminus, the 286-residue chain is Undecaprenyl-diphosphatase (286 aa).

7 helical membrane-spanning segments follow: residues 43-63 (FWKM…PIYF), 91-111 (LTII…KIIG), 118-138 (IIMG…DVMF), 150-170 (MSVG…VFPG), 189-209 (AAAL…ATCY), 236-256 (ITLA…VAWF), and 264-284 (GFVP…AWAL).

Belongs to the UppP family.

Its subcellular location is the cell inner membrane. It catalyses the reaction di-trans,octa-cis-undecaprenyl diphosphate + H2O = di-trans,octa-cis-undecaprenyl phosphate + phosphate + H(+). In terms of biological role, catalyzes the dephosphorylation of undecaprenyl diphosphate (UPP). Confers resistance to bacitracin. The sequence is that of Undecaprenyl-diphosphatase from Koribacter versatilis (strain Ellin345).